A 434-amino-acid chain; its full sequence is Sodium/bile acid cotransporter 5 (434 aa).

An N-terminal signal peptide occupies residues 1 to 18 (MSGKLFIILLLLVTPGEA). Residues 19 to 129 (RKSFLRFLNI…VSVFRQTEDS (111 aa)) lie on the Extracellular side of the membrane. N-linked (GlcNAc...) asparagine glycosylation is found at asparagine 73 and asparagine 96. A helical membrane pass occupies residues 130-150 (LFQEPIHVNSSVFLLVLLMIL). At 151–172 (LNKCAFGCKIELQVLQTVWKRP) the chain is on the cytoplasmic side. The helical transmembrane segment at 173-193 (LPILLGAVTQFFLMPFCGFLL) threads the bilayer. The Extracellular segment spans residues 194–195 (SQ). The helical transmembrane segment at 196 to 216 (ILGLSKAQAFGFVMTCTCPGG) threads the bilayer. Over 217-232 (GGGYLFALLLEGDVTL) the chain is Cytoplasmic. Residues 233–255 (AILMACTSTSLALIMMPVNSYLY) form a helical membrane-spanning segment. The Extracellular segment spans residues 256-268 (SCLLGLAGVFHVP). Residues 269–289 (VLKIVSTLLFILTPVSIGIVI) form a helical membrane-spanning segment. Residues 290–306 (KHRMPKKAVCLERVVQP) lie on the Cytoplasmic side of the membrane. The helical transmembrane segment at 307-327 (LSLTLMLVGVYLAFRMGLVFL) threads the bilayer. Residues 328–331 (RMAN) are Extracellular-facing. Residues 332–352 (LEVFLLGLLVPVLGFSFGYSF) traverse the membrane as a helical segment. Residues 353-365 (AKVYLLPLPVCKT) are Cytoplasmic-facing. The helical transmembrane segment at 366 to 386 (VAIESGMLNSFLALAIIQLSF) threads the bilayer. Topologically, residues 387–395 (PQSKAYEAS) are extracellular. A helical membrane pass occupies residues 396 to 416 (VAPFTVAMCSSCEMLLLLLVY). Residues 417–434 (KAKKRPLLSTENEKAPLV) are Cytoplasmic-facing.

The protein belongs to the bile acid:sodium symporter (BASS) (TC 2.A.28) family.

The protein localises to the membrane. In Rattus norvegicus (Rat), this protein is Sodium/bile acid cotransporter 5 (Slc10a5).